A 536-amino-acid polypeptide reads, in one-letter code: Arylsulfatase K (536 aa).

Residues 1 to 24 form the signal peptide; it reads MIQKCIALSLFLFSALPEDNIVRA. Ca(2+) contacts are provided by Asp-42 and Cys-82. Cys-82 serves as the catalytic Nucleophile. At Cys-82 the chain carries 3-oxoalanine (Cys). Lys-130 contacts substrate. A glycan (N-linked (GlcNAc...) asparagine) is linked at Asn-195. His-253 is a binding site for substrate. Asn-264 is a glycosylation site (N-linked (GlcNAc...) asparagine). Ca(2+) is bound by residues Asp-315 and His-316. Asn-377, Asn-416, and Asn-501 each carry an N-linked (GlcNAc...) asparagine glycan.

This sequence belongs to the sulfatase family. The cofactor is Ca(2+). The conversion to 3-oxoalanine (also known as C-formylglycine, FGly), of a serine or cysteine residue in prokaryotes and of a cysteine residue in eukaryotes, is critical for catalytic activity.

It is found in the secreted. The protein resides in the lysosome. It catalyses the reaction an aryl sulfate + H2O = a phenol + sulfate + H(+). The catalysed reaction is Hydrolysis of the 2-sulfate groups of the 2-O-sulfo-D-glucuronate residues of chondroitin sulfate, heparin and heparitin sulfate.. In terms of biological role, catalyzes the hydrolysis of pseudosubstrates such as p-nitrocatechol sulfate and p-nitrophenyl sulfate. Catalyzes the hydrolysis of the 2-sulfate groups of the 2-O-sulfo-D-glucuronate residues of chondroitin sulfate, heparin and heparitin sulfate. Acts selectively on 2-sulfoglucuronate and lacks activity against 2-sulfoiduronate. The polypeptide is Arylsulfatase K (arsk) (Xenopus laevis (African clawed frog)).